A 199-amino-acid polypeptide reads, in one-letter code: Peroxiredoxin-1 (199 aa).

Ser-2 carries the N-acetylserine modification. In terms of domain architecture, Thioredoxin spans 6-165 (AKIGHPAPNF…TLRLVQAFQF (160 aa)). Lys-7 is subject to N6-acetyllysine; alternate. A Glycyl lysine isopeptide (Lys-Gly) (interchain with G-Cter in SUMO2); alternate cross-link involves residue Lys-7. Residues Lys-16 and Lys-27 each carry the N6-acetyllysine modification. Ser-32 carries the post-translational modification Phosphoserine. Lys-35 carries the N6-acetyllysine; alternate modification. N6-succinyllysine; alternate is present on Lys-35. Cys-52 (cysteine sulfenic acid (-SOH) intermediate) is an active-site residue. Thr-90 carries the phosphothreonine modification. Residue Lys-120 forms a Glycyl lysine isopeptide (Lys-Gly) (interchain with G-Cter in SUMO2) linkage. Lys-136 carries the N6-acetyllysine modification. A disordered region spans residues 176–199 (GWKPGSDTIKPDVQKSKEYFSKQK). Positions 184-199 (IKPDVQKSKEYFSKQK) are enriched in basic and acidic residues. A Glycyl lysine isopeptide (Lys-Gly) (interchain with G-Cter in SUMO1) cross-link involves residue Lys-185. Lys-197 carries the N6-acetyllysine modification.

This sequence belongs to the peroxiredoxin family. AhpC/Prx1 subfamily. As to quaternary structure, homodimer; disulfide-linked, upon oxidation. 5 homodimers assemble to form a ring-like decamer. Interacts with GDPD5; forms a mixed-disulfide with GDPD5. Interacts with SESN1 and SESN2. Interacts with FAM107A. Phosphorylated on Thr-90 during the M-phase, which leads to a decrease in enzymatic activity. In terms of processing, acetylation increases reducing activity and resistance to superoxidation. Deacetylated by HDAC6 which decreases reducing activity. In terms of tissue distribution, detected in heart and skeletal muscle (at protein level).

The protein resides in the cytoplasm. It carries out the reaction a hydroperoxide + [thioredoxin]-dithiol = an alcohol + [thioredoxin]-disulfide + H2O. Functionally, thiol-specific peroxidase that catalyzes the reduction of hydrogen peroxide and organic hydroperoxides to water and alcohols, respectively. Plays a role in cell protection against oxidative stress by detoxifying peroxides and as sensor of hydrogen peroxide-mediated signaling events. Might participate in the signaling cascades of growth factors and tumor necrosis factor-alpha by regulating the intracellular concentrations of H(2)O(2). Reduces an intramolecular disulfide bond in GDPD5 that gates the ability to GDPD5 to drive postmitotic motor neuron differentiation. In Myotis lucifugus (Little brown bat), this protein is Peroxiredoxin-1 (PRDX1).